The following is a 323-amino-acid chain: Phosphatidylglycerol--prolipoprotein diacylglyceryl transferase (323 aa).

A run of 3 helical transmembrane segments spans residues 15–35 (VIQGIPITWYSLSYIFIILIS), 58–78 (FMFSLVLGAILGGRLASTLVY), and 106–126 (GMAIHGGFLGAIIAPLITINT). Residue Arg-156 participates in a 1,2-diacyl-sn-glycero-3-phospho-(1'-sn-glycerol) binding. 2 helical membrane passes run 242–262 (GFIFGVYIMLYAFFRFFIEYL) and 289–309 (ISMGQILSLALMLSGLIWIIV).

Belongs to the Lgt family.

The protein resides in the cell inner membrane. It catalyses the reaction L-cysteinyl-[prolipoprotein] + a 1,2-diacyl-sn-glycero-3-phospho-(1'-sn-glycerol) = an S-1,2-diacyl-sn-glyceryl-L-cysteinyl-[prolipoprotein] + sn-glycerol 1-phosphate + H(+). It functions in the pathway protein modification; lipoprotein biosynthesis (diacylglyceryl transfer). Its function is as follows. Catalyzes the transfer of the diacylglyceryl group from phosphatidylglycerol to the sulfhydryl group of the N-terminal cysteine of a prolipoprotein, the first step in the formation of mature lipoproteins. This is Phosphatidylglycerol--prolipoprotein diacylglyceryl transferase from Borreliella afzelii (strain PKo) (Borrelia afzelii).